The chain runs to 484 residues: ATP synthase subunit beta (484 aa).

Position 168-175 (168-175 (GGAGVGKT)) interacts with ATP.

It belongs to the ATPase alpha/beta chains family. In terms of assembly, F-type ATPases have 2 components, CF(1) - the catalytic core - and CF(0) - the membrane proton channel. CF(1) has five subunits: alpha(3), beta(3), gamma(1), delta(1), epsilon(1). CF(0) has three main subunits: a(1), b(2) and c(9-12). The alpha and beta chains form an alternating ring which encloses part of the gamma chain. CF(1) is attached to CF(0) by a central stalk formed by the gamma and epsilon chains, while a peripheral stalk is formed by the delta and b chains.

The protein localises to the cell membrane. The enzyme catalyses ATP + H2O + 4 H(+)(in) = ADP + phosphate + 5 H(+)(out). In terms of biological role, produces ATP from ADP in the presence of a proton gradient across the membrane. The catalytic sites are hosted primarily by the beta subunits. The polypeptide is ATP synthase subunit beta (Renibacterium salmoninarum (strain ATCC 33209 / DSM 20767 / JCM 11484 / NBRC 15589 / NCIMB 2235)).